Consider the following 417-residue polypeptide: 3-ketoacyl-CoA thiolase, peroxisomal (417 aa).

The transit peptide at 1–15 directs the protein to the peroxisome; it reads MSQRLQSIKDHLVES. The tract at residues 1 to 15 is PTS2-type peroxisomal targeting signal; it reads MSQRLQSIKDHLVES. Cys125 functions as the Acyl-thioester intermediate in the catalytic mechanism. Residues His375 and Cys403 each act as proton acceptor in the active site.

This sequence belongs to the thiolase-like superfamily. Thiolase family. As to quaternary structure, homodimer. Interacts (via PTS2-type peroxisomal targeting signal region) with PEX7; leading to its translocation into peroxisomes.

It localises to the peroxisome. It is found in the mitochondrion intermembrane space. It carries out the reaction an acyl-CoA + acetyl-CoA = a 3-oxoacyl-CoA + CoA. The protein operates within lipid metabolism; fatty acid metabolism. Functionally, responsible for the thiolytic cleavage of straight chain 3-keto fatty acyl-CoAs (3-oxoacyl-CoAs). This chain is 3-ketoacyl-CoA thiolase, peroxisomal (POT1), found in Saccharomyces cerevisiae (strain ATCC 204508 / S288c) (Baker's yeast).